A 198-amino-acid polypeptide reads, in one-letter code: Sorcin (198 aa).

4 consecutive EF-hand domains span residues glutamine 45–alanine 64, phenylalanine 70–leucine 98, alanine 100–arginine 135, and serine 151–leucine 169. Ca(2+) contacts are provided by aspartate 83, aspartate 85, serine 87, threonine 89, glutamate 94, aspartate 113, aspartate 115, serine 117, threonine 119, and glutamate 124. Position 178 is a phosphoserine (serine 178).

In terms of assembly, homodimer. Interacts with GCA, RYR2 and ANXA7. As to expression, detected in cardiac myocytes.

The protein resides in the cytoplasm. It is found in the sarcoplasmic reticulum membrane. Functionally, calcium-binding protein that modulates excitation-contraction coupling in the heart. Contributes to calcium homeostasis in the heart sarcoplasmic reticulum. Modulates the activity of RYR2 calcium channels. The polypeptide is Sorcin (Sri) (Mus musculus (Mouse)).